The primary structure comprises 367 residues: Deoxyhypusine synthase-like protein (367 aa).

The disordered stretch occupies residues 1–23 (MKSLFQRRASKVRETEAMNAPVP).

This sequence belongs to the deoxyhypusine synthase family.

This is Deoxyhypusine synthase-like protein from Caulobacter vibrioides (strain ATCC 19089 / CIP 103742 / CB 15) (Caulobacter crescentus).